Reading from the N-terminus, the 468-residue chain is Peroxisome proliferator-activated receptor alpha (468 aa).

The segment at residues 99 to 173 is a DNA-binding region (nuclear receptor); that stretch reads NIECRICGDK…VGMSHNAIRF (75 aa). 2 NR C4-type zinc fingers span residues 102-122 and 139-161; these read CRICGDKASGYHYGVHACEGC and CDRSCKIQKKNRNKCQYCRFHKC. Residues 239 to 466 form the NR LBD domain; sequence FVIHDMETLC…HPLLQEIYRD (228 aa). The required for heterodimerization with RXRA stretch occupies residues 304-433; it reads DQVTLLKYGV…PKLLQKMVDL (130 aa).

Belongs to the nuclear hormone receptor family. NR1 subfamily. As to quaternary structure, heterodimer; with RXRA. This heterodimerization is required for DNA binding and transactivation activity. Interacts with NCOA3 coactivator. Interacts with CITED2; the interaction stimulates its transcriptional activity. Also interacts with PPARBP in vitro. Interacts with AKAP13, LPIN1, PRDM16 and coactivator NCOA6. Interacts with ASXL1 and ASXL2. Interacts with PER2. Interacts with SIRT1; the interaction seems to be modulated by NAD(+) levels. Interacts with CRY1 and CRY2. In hepatocytes, interacts with PAQR3 and HUWE1; the interactions promote PPARA poylubiquitination and HUWE1-mediated degradation. Ubiquitinated by E3 ubiquitin-protein ligase HUWE1; leading to proteasomal degradation. In terms of processing, phosphorylated. As to expression, highly expressed in liver, kidney and heart. Very weakly expressed in brain and testis.

It is found in the nucleus. Its function is as follows. Ligand-activated transcription factor. Key regulator of lipid metabolism. Activated by the endogenous ligand 1-palmitoyl-2-oleoyl-sn-glycerol-3-phosphocholine (16:0/18:1-GPC). Activated by oleylethanolamide, a naturally occurring lipid that regulates satiety. Receptor for peroxisome proliferators such as hypolipidemic drugs and fatty acids. Regulates the peroxisomal beta-oxidation pathway of fatty acids. Functions as a transcription activator for the ACOX1 and P450 genes. Transactivation activity requires heterodimerization with RXRA and is antagonized by NR2C2. May be required for the propagation of clock information to metabolic pathways regulated by PER2. This Mus musculus (Mouse) protein is Peroxisome proliferator-activated receptor alpha (Ppara).